The chain runs to 220 residues: Fructose-6-phosphate aldolase (220 aa).

Lys-85 (schiff-base intermediate with substrate) is an active-site residue.

Belongs to the transaldolase family. Type 3A subfamily. In terms of assembly, homodecamer.

It is found in the cytoplasm. The catalysed reaction is beta-D-fructose 6-phosphate = dihydroxyacetone + D-glyceraldehyde 3-phosphate. Functionally, catalyzes the reversible formation of fructose 6-phosphate from dihydroxyacetone and D-glyceraldehyde 3-phosphate via an aldolization reaction. In Salmonella schwarzengrund (strain CVM19633), this protein is Fructose-6-phosphate aldolase.